A 71-amino-acid chain; its full sequence is Protein KleB (71 aa).

The segment at residues 9–28 is a DNA-binding region (H-T-H motif); sequence IETCCRRCGKSIRTLSHTII.

This Escherichia coli protein is Protein KleB (kleB).